A 446-amino-acid chain; its full sequence is High mobility group B protein 13 (446 aa).

Disordered stretches follow at residues 1–43 (MSTV…TKSF) and 110–130 (LAQT…AETK). Residues 11 to 22 (AKKSRNSRKALK) are compositionally biased toward basic residues. 2 consecutive DNA-binding regions (HMG box) follow at residues 129–197 (TKRP…TKEK) and 246–312 (PKQP…EGYK). The segment covering 349–371 (NIIKKTKETAKNKKKNENVDPNK) has biased composition (basic and acidic residues). A disordered region spans residues 349-377 (NIIKKTKETAKNKKKNENVDPNKPKKPTS). Residues 372–440 (PKKPTSSYFL…AYKKEVEEYN (69 aa)) constitute a DNA-binding region (HMG box 3).

The protein belongs to the HMGB family.

It localises to the nucleus. This chain is High mobility group B protein 13 (HMGB13), found in Arabidopsis thaliana (Mouse-ear cress).